Here is a 326-residue protein sequence, read N- to C-terminus: MSTNLKYLSLGILVFQTTSLVLTMRYSRTLKEEGPRYLSSTAVVVAELLKIMACILLVYKDSKCSLRALNRILHDEILNKPMETLKLAIPSGIYTLQNNLLYVALSNLDAATYQVTYQLKILTTALFSVSMLSKKLGVYQWLSLVILMTGVAFVQWPSDSQELDSKELSAGSQFVGLMAVLTACFSSGFAGVYFEKILKETKQSVWIRNIQLGFFGSIFGLMGVYIYDGELVSKNGFFQGYNRLTWIVVILQALGGLVIAAVIKYADNILKGFATSLSIILSTLISYFWLQDFVPTSVFFLGAILVITATFLYGYDPKPTGNPTKA.

A run of 8 helical transmembrane segments spans residues 8–24 (LSLGILVFQTTSLVLTM), 42–58 (AVVVAELLKIMACILLV), 138–154 (VYQWLSLVILMTGVAFV), 174–190 (FVGLMAVLTACFSSGFA), 210–226 (IQLGFFGSIFGLMGVYI), 247–263 (IVVILQALGGLVIAAVI), 269–285 (ILKGFATSLSIILSTLI), and 296–312 (TSVFFLGAILVITATFL).

It belongs to the nucleotide-sugar transporter family. SLC35A subfamily. Interacts with SLC35A2; the interaction is reduced in the presence of SLC35A4. Found in a complex with SLC35A2 and SLC35A4.

It is found in the golgi apparatus membrane. Its function is as follows. Uridine diphosphate-N-acetylglucosamine (UDP-GlcNAc) transporter in the Golgi apparatus. May supply UDP-GlcNAc as substrate for Golgi-resident glycosyltransferases that generate branching of diantennary oligosaccharides. The chain is UDP-N-acetylglucosamine transporter (SLC35A3) from Canis lupus familiaris (Dog).